Consider the following 231-residue polypeptide: Octanoyltransferase (231 aa).

One can recognise a BPL/LPL catalytic domain in the interval Pro-49–Trp-227. Substrate-binding positions include Arg-91–His-98, Ala-158–Gly-160, and Gly-171–Ala-173. Cys-189 (acyl-thioester intermediate) is an active-site residue.

It belongs to the LipB family.

The protein localises to the cytoplasm. The catalysed reaction is octanoyl-[ACP] + L-lysyl-[protein] = N(6)-octanoyl-L-lysyl-[protein] + holo-[ACP] + H(+). Its pathway is protein modification; protein lipoylation via endogenous pathway; protein N(6)-(lipoyl)lysine from octanoyl-[acyl-carrier-protein]: step 1/2. Its function is as follows. Catalyzes the transfer of endogenously produced octanoic acid from octanoyl-acyl-carrier-protein onto the lipoyl domains of lipoate-dependent enzymes. Lipoyl-ACP can also act as a substrate although octanoyl-ACP is likely to be the physiological substrate. The sequence is that of Octanoyltransferase from Parasynechococcus marenigrum (strain WH8102).